Reading from the N-terminus, the 209-residue chain is MSLIDRFIAEFDTALRSVVGGAHSRRPTPGSGEISHANLDVAQRKHAAGLMRVNHVGEVCAQALYQSQKMLARNPQIQVMLEHSGQEEMDHLAWCETRLQELGSHPSYLNPFWYAGSFAIGMLAGLAGDRWSLGFVAETEKQVENHLESHLETLPQEDLRSRAIVDQMRIDEIEHGQAALHAGGVVLPDPVQKVMQAMSKVMTTAAYRI.

Fe cation contacts are provided by Glu58, Glu88, His91, Glu140, Glu172, and His175.

Belongs to the COQ7 family. Fe cation serves as cofactor.

It localises to the cell membrane. The enzyme catalyses a 5-methoxy-2-methyl-3-(all-trans-polyprenyl)benzene-1,4-diol + AH2 + O2 = a 3-demethylubiquinol + A + H2O. The protein operates within cofactor biosynthesis; ubiquinone biosynthesis. Its function is as follows. Catalyzes the hydroxylation of 2-nonaprenyl-3-methyl-6-methoxy-1,4-benzoquinol during ubiquinone biosynthesis. In Polynucleobacter asymbioticus (strain DSM 18221 / CIP 109841 / QLW-P1DMWA-1) (Polynucleobacter necessarius subsp. asymbioticus), this protein is 3-demethoxyubiquinol 3-hydroxylase.